Consider the following 211-residue polypeptide: Cytidylate kinase (211 aa).

ATP is bound at residue 9–17 (GPAAAGKGT).

It belongs to the cytidylate kinase family. Type 1 subfamily.

It localises to the cytoplasm. It catalyses the reaction CMP + ATP = CDP + ADP. The enzyme catalyses dCMP + ATP = dCDP + ADP. The chain is Cytidylate kinase from Paramagnetospirillum magneticum (strain ATCC 700264 / AMB-1) (Magnetospirillum magneticum).